Reading from the N-terminus, the 439-residue chain is Probable anion transporter 7 (439 aa).

A signal peptide spans 1-28 (MTALTRMKFPKRYVIVLLTFICTNVCYI). 11 consecutive transmembrane segments (helical) span residues 53–73 (MILS…GWAA), 81–101 (VLLL…LDPK), 104–124 (VILV…FPAI), 143–163 (LTTS…PSLV), 167–187 (GAQS…VIWL), 232–252 (IIFS…HYAL), 280–300 (LPYF…DHLI), 312–332 (KLLN…LPLF), 338–358 (TVLC…GFAV), 367–387 (FAGI…IVGV), and 412–432 (TVFF…LIFS).

Belongs to the major facilitator superfamily. Sodium/anion cotransporter (TC 2.A.1.14) family.

The protein resides in the cell membrane. Functionally, probable anion transporter. This Oryza sativa subsp. japonica (Rice) protein is Probable anion transporter 7 (PHT4;7).